The chain runs to 516 residues: Bifunctional pantoate ligase/cytidylate kinase (516 aa).

The pantoate--beta-alanine ligase stretch occupies residues methionine 1 to threonine 279. Methionine 29–histidine 36 contributes to the ATP binding site. Histidine 36 acts as the Proton donor in catalysis. Glutamine 64 provides a ligand contact to (R)-pantoate. Glutamine 64 serves as a coordination point for beta-alanine. Residue glycine 153–aspartate 156 participates in ATP binding. Residue glutamine 159 participates in (R)-pantoate binding. Tyrosine 190–arginine 193 contacts ATP. Residues phenylalanine 280 to serine 516 form a cytidylate kinase region.

In the N-terminal section; belongs to the pantothenate synthetase family. The protein in the C-terminal section; belongs to the cytidylate kinase family. Type 1 subfamily.

The protein localises to the cytoplasm. It catalyses the reaction (R)-pantoate + beta-alanine + ATP = (R)-pantothenate + AMP + diphosphate + H(+). The catalysed reaction is CMP + ATP = CDP + ADP. It carries out the reaction dCMP + ATP = dCDP + ADP. The protein operates within cofactor biosynthesis; (R)-pantothenate biosynthesis; (R)-pantothenate from (R)-pantoate and beta-alanine: step 1/1. Its function is as follows. Catalyzes the condensation of pantoate with beta-alanine in an ATP-dependent reaction via a pantoyl-adenylate intermediate. In terms of biological role, catalyzes the transfer of a phosphate group from ATP to either CMP or dCMP to form CDP or dCDP and ADP, respectively. The chain is Bifunctional pantoate ligase/cytidylate kinase from Prochlorococcus marinus (strain NATL2A).